The following is a 140-amino-acid chain: Nucleoside diphosphate kinase (140 aa).

ATP is bound by residues Lys11, Phe59, Arg87, Thr93, Arg104, and Asn114. Catalysis depends on His117, which acts as the Pros-phosphohistidine intermediate.

It belongs to the NDK family. In terms of assembly, homotetramer. The cofactor is Mg(2+).

The protein localises to the cytoplasm. The catalysed reaction is a 2'-deoxyribonucleoside 5'-diphosphate + ATP = a 2'-deoxyribonucleoside 5'-triphosphate + ADP. The enzyme catalyses a ribonucleoside 5'-diphosphate + ATP = a ribonucleoside 5'-triphosphate + ADP. In terms of biological role, major role in the synthesis of nucleoside triphosphates other than ATP. The ATP gamma phosphate is transferred to the NDP beta phosphate via a ping-pong mechanism, using a phosphorylated active-site intermediate. This Francisella tularensis subsp. mediasiatica (strain FSC147) protein is Nucleoside diphosphate kinase.